Consider the following 313-residue polypeptide: Ester hydrolase C11orf54 homolog (313 aa).

Positions 264, 266, and 276 each coordinate Zn(2+).

Monomer. It depends on Zn(2+) as a cofactor.

It is found in the nucleus. The protein resides in the cytoplasm. Its function is as follows. Exhibits ester hydrolase activity on the substrate p-nitrophenyl acetate, in vitro. May regulate DNA damage and repair by regulating HIF1A degradation via chaperone-mediated autophagy (CMA). In Xenopus tropicalis (Western clawed frog), this protein is Ester hydrolase C11orf54 homolog.